Here is a 704-residue protein sequence, read N- to C-terminus: ATP-dependent DNA helicase Hel308 (704 aa).

Residues Q31 and 49–56 each bind ATP; that span reads SPTASGKT. The Helicase ATP-binding domain occupies 36–200; that stretch reads RKGLLDGKRL…WLNAELVATN (165 aa). Residues 148–151 carry the DEAH box motif; the sequence is DEFH. Positions 235–439 constitute a Helicase C-terminal domain; that stretch reads AIIAYTLDIV…AFYSFLISII (205 aa). The tract at residues 366–645 is binds Hjc; the sequence is VVGYMDLIPV…LHARVKDGVK (280 aa). A required for helicase activity region spans residues 432-644; the sequence is YSFLISIIAS…ELHARVKDGV (213 aa). Residues 646 to 704 are inhibits intrinsic ATPase, and helicase; that stretch reads PELIELVKIPGIGRVRARLLYQHDIKKPEDIVLNPEKVKQLLGPNLGEKIVREAARTIA.

This sequence belongs to the helicase family. Hel308 subfamily. As to quaternary structure, monomer; forms a 1:2 complex with Hjc, which may form a complex with Holliday junction DNA. Mg(2+) is required as a cofactor.

The catalysed reaction is Couples ATP hydrolysis with the unwinding of duplex DNA by translocating in the 3'-5' direction.. The enzyme catalyses ATP + H2O = ADP + phosphate + H(+). It catalyses the reaction Couples ATP hydrolysis with the unwinding of duplex DNA at the replication fork by translocating in the 5'-3' direction. This creates two antiparallel DNA single strands (ssDNA). The leading ssDNA polymer is the template for DNA polymerase III holoenzyme which synthesizes a continuous strand.. With respect to regulation, helicase activity is inhibited by Hjc and by PCNA123 and PCNA323. An ATP, Mg(2+)-dependent DNA 3'-5' and 5'-3' helicase that may be involved in repair of stalled replication forks. Stimulated by both ss and dsDNA. Unwinds both leading and lagging strands in replication fork structures, unlike orthologs in P.furiosus and M.thermautotrophicus which only unwind the lagging strand and only have 3'-5' helicase activity. Preferentially binds dsDNA with overhangs or branched DNA. Able to anneal DNA substrates that could form a replication fork-like structure, has replication fork reversal activity (at least in vitro). This is ATP-dependent DNA helicase Hel308 from Sulfurisphaera tokodaii (strain DSM 16993 / JCM 10545 / NBRC 100140 / 7) (Sulfolobus tokodaii).